A 145-amino-acid chain; its full sequence is Allergen Sin a 1 (145 aa).

The disordered stretch occupies residues 34 to 62 (SGSGPSWTLDDEFDFEDDMENPQGPQQRP). Residues 40–54 (WTLDDEFDFEDDMEN) constitute a propeptide that is removed on maturation. Acidic residues predominate over residues 42–53 (LDDEFDFEDDME).

This sequence belongs to the 2S seed storage albumins family. The protein consists of two chains linked by disulfide bonds.

In terms of biological role, this is a 2S seed storage protein. This is Allergen Sin a 1 from Sinapis alba (White mustard).